The primary structure comprises 115 residues: Pycsar effector protein TpPycTM (115 aa).

2 helical membrane passes run 44–64 and 74–94; these read IGNL…YATN and VWNI…VILV.

Its subcellular location is the cell inner membrane. Its function is as follows. Pycsar (pyrimidine cyclase system for antiphage resistance) provides immunity against bacteriophage. The pyrimidine cyclase (PycC) synthesizes cyclic nucleotides in response to infection; these serve as specific second messenger signals. The signals activate the adjacent effector, leading to bacterial cell death and abortive phage infection. A clade C Pycsar system. The effector gene of a two-gene Pycsar system. Expression of this and adjacent uridylate cyclase TpPycC (AC A0A1T4LJ54) probably confers resistance to bacteriophage. The genes are probably only expressed in response to bacteriophage infection. Probably only responds to cUMP (produced by its cognate NTP cyclase), acts by impairing membrane integrity. The protein is Pycsar effector protein TpPycTM of Treponema porcinum.